Here is a 501-residue protein sequence, read N- to C-terminus: Aminoaldehyde dehydrogenase ALDH10A8, chloroplastic (501 aa).

Na(+) contacts are provided by D99 and L189. NAD(+) is bound by residues G238 to G243 and G238 to K245. E260 functions as the Proton acceptor in the catalytic mechanism. Residues C294 and E393 each coordinate NAD(+). The Nucleophile role is filled by C294.

This sequence belongs to the aldehyde dehydrogenase family. In terms of assembly, homodimer. In terms of tissue distribution, widely expressed.

It is found in the cytoplasm. Its subcellular location is the plastid. It localises to the chloroplast. The enzyme catalyses 4-aminobutanal + NAD(+) + H2O = 4-aminobutanoate + NADH + 2 H(+). It carries out the reaction 3-aminopropanal + NAD(+) + H2O = beta-alanine + NADH + 2 H(+). The catalysed reaction is 4-(trimethylamino)butanal + NAD(+) + H2O = 4-(trimethylamino)butanoate + NADH + 2 H(+). It catalyses the reaction 4-guanidinobutanal + NAD(+) + H2O = 4-guanidinobutanoate + NADH + 2 H(+). The enzyme catalyses betaine aldehyde + NAD(+) + H2O = glycine betaine + NADH + 2 H(+). The protein operates within amine and polyamine biosynthesis; betaine biosynthesis via choline pathway; betaine from betaine aldehyde: step 1/1. Its function is as follows. Dehydrogenase that catalyzes the oxidation of several aminoaldehydes. Metabolizes and detoxifies aldehyde products of polyamine degradation to non-toxic amino acids. Catalyzes the oxidation of 4-aminobutanal and 3-aminopropanal to 4-aminobutanoate and beta-alanine, respectively. Production of 4-aminobutinoate by ALDH10A8 may confer tolerance to salt stress. Catalyzes the oxidation of 4-(trimethylamino)butanal and 4-guanidinobutanal to 4-trimethylammoniobutanoate and 4-guanidinobutanoate, respectively. Involved in glycine betaine biosynthesis. Catalyzes with low efficiency the oxidation of betaine aldehyde to glycine betaine. The sequence is that of Aminoaldehyde dehydrogenase ALDH10A8, chloroplastic from Arabidopsis thaliana (Mouse-ear cress).